The primary structure comprises 235 residues: Uridylate kinase (235 aa).

Gly10–Ser11 lines the ATP pocket. Residue Gly45 participates in UMP binding. 2 residues coordinate ATP: Gly46 and Arg50. UMP is bound by residues Asp67 and Val115–Thr121. ATP contacts are provided by Thr141, Tyr147, and Asp150.

The protein belongs to the UMP kinase family. As to quaternary structure, homohexamer.

It localises to the cytoplasm. It catalyses the reaction UMP + ATP = UDP + ADP. It functions in the pathway pyrimidine metabolism; CTP biosynthesis via de novo pathway; UDP from UMP (UMPK route): step 1/1. Inhibited by UTP. Its function is as follows. Catalyzes the reversible phosphorylation of UMP to UDP. The protein is Uridylate kinase of Methanocorpusculum labreanum (strain ATCC 43576 / DSM 4855 / Z).